Consider the following 71-residue polypeptide: Large ribosomal subunit protein bL31 (71 aa).

4 residues coordinate Zn(2+): C16, C18, C37, and C40.

This sequence belongs to the bacterial ribosomal protein bL31 family. Type A subfamily. In terms of assembly, part of the 50S ribosomal subunit. Zn(2+) serves as cofactor.

Its function is as follows. Binds the 23S rRNA. This chain is Large ribosomal subunit protein bL31, found in Actinobacillus succinogenes (strain ATCC 55618 / DSM 22257 / CCUG 43843 / 130Z).